We begin with the raw amino-acid sequence, 364 residues long: MRVMRVMRPRTLLLLLSGVLVLTETLAGSHSLRYFYTGVSRPGLGEPRFIAVGYVDDTQFVRFDSDAPNPREEPRVPWMEQEGPEYWDRNTRIYKDTAQIFRVDLNTLRGYYNQSETGSHNIQAMYGCDVGPDGRLLRGFWQFGYDGRDYIALNEELRSWTAADTAAQITKRKWEAAGAAETWRNYLEGECVEWLRRYLENGKDTLLRADPPKAHVTHHSISDREVTLRCWALGFYPEEISLTWQREGEDQTQDMELVETRPSGDGTFQKWAALVVPSGEEQRYTCRVQHEGLQEPLTLRWEPPQTSFLIMGIIVGLVLLVVALVAGAVIWRKKRSGEKGRIYTQAASSDSAQGSDVSLTVPKV.

Positions 1–27 (MRVMRVMRPRTLLLLLSGVLVLTETLA) are cleaved as a signal peptide. The interval 28 to 117 (GSHSLRYFYT…LRGYYNQSET (90 aa)) is alpha-1. The Extracellular portion of the chain corresponds to 28 to 310 (GSHSLRYFYT…WEPPQTSFLI (283 aa)). Asparagine 113 carries an N-linked (GlcNAc...) asparagine glycan. The alpha-2 stretch occupies residues 118–209 (GSHNIQAMYG…ENGKDTLLRA (92 aa)). Intrachain disulfides connect cysteine 128–cysteine 191 and cysteine 230–cysteine 286. The alpha-3 stretch occupies residues 210 to 301 (DPPKAHVTHH…GLQEPLTLRW (92 aa)). The Ig-like C1-type domain maps to 212-298 (PKAHVTHHSI…QHEGLQEPLT (87 aa)). The connecting peptide stretch occupies residues 302–310 (EPPQTSFLI). Residues 311–331 (MGIIVGLVLLVVALVAGAVIW) traverse the membrane as a helical segment. Topologically, residues 332–364 (RKKRSGEKGRIYTQAASSDSAQGSDVSLTVPKV) are cytoplasmic. Residues serine 355 and serine 358 each carry the phosphoserine modification.

The protein belongs to the MHC class I family. Heterodimer of an alpha chain and a beta chain (beta-2-microglobulin).

The protein localises to the membrane. Involved in the presentation of foreign antigens to the immune system. The chain is BOLA class I histocompatibility antigen, alpha chain BL3-7 from Bos taurus (Bovine).